We begin with the raw amino-acid sequence, 283 residues long: Protein FDD123 (283 aa).

The next 7 membrane-spanning stretches (helical) occupy residues 24–44, 52–72, 97–117, 122–142, 148–168, 185–205, and 217–237; these read WLWAAFSVFGVSLLTVVAWTF, LFHQIAIVVLTTGSLAYFSMA, YIQWFITFPLLLLELLLATGL, IFTTLFMSIVLVITGLVAALV, WGYYTFGVSALFYIWYVLLWH, ILAAGYLSFLLLLYPIAWACA, and MIWYGILDIFAGPIFLFFFLW.

The protein belongs to the archaeal/bacterial/fungal opsin family.

The protein localises to the membrane. This is Protein FDD123 (FDD123) from Trametes versicolor (White-rot fungus).